The sequence spans 115 residues: T cell receptor beta variable 18 (115 aa).

Residues 1–21 (MDTRLLCCAVICLLGAGLSNA) form the signal peptide. Positions 22-115 (GVMQNPRHLV…SAAYFCASSP (94 aa)) constitute an Ig-like domain. A disulfide bridge links Cys-42 with Cys-111.

In terms of assembly, alpha-beta TR is a heterodimer composed of an alpha and beta chain; disulfide-linked. The alpha-beta TR is associated with the transmembrane signaling CD3 coreceptor proteins to form the TR-CD3 (TcR or TCR). The assembly of alpha-beta TR heterodimers with CD3 occurs in the endoplasmic reticulum where a single alpha-beta TR heterodimer associates with one CD3D-CD3E heterodimer, one CD3G-CD3E heterodimer and one CD247 homodimer forming a stable octameric structure. CD3D-CD3E and CD3G-CD3E heterodimers preferentially associate with TR alpha and TR beta chains, respectively. The association of the CD247 homodimer is the last step of TcR assembly in the endoplasmic reticulum and is required for transport to the cell surface.

It localises to the cell membrane. Its function is as follows. V region of the variable domain of T cell receptor (TR) beta chain that participates in the antigen recognition. Alpha-beta T cell receptors are antigen specific receptors which are essential to the immune response and are present on the cell surface of T lymphocytes. Recognize peptide-major histocompatibility (MH) (pMH) complexes that are displayed by antigen presenting cells (APC), a prerequisite for efficient T cell adaptive immunity against pathogens. Binding of alpha-beta TR to pMH complex initiates TR-CD3 clustering on the cell surface and intracellular activation of LCK that phosphorylates the ITAM motifs of CD3G, CD3D, CD3E and CD247 enabling the recruitment of ZAP70. In turn ZAP70 phosphorylates LAT, which recruits numerous signaling molecules to form the LAT signalosome. The LAT signalosome propagates signal branching to three major signaling pathways, the calcium, the mitogen-activated protein kinase (MAPK) kinase and the nuclear factor NF-kappa-B (NF-kB) pathways, leading to the mobilization of transcription factors that are critical for gene expression and essential for T cell growth and differentiation. The T cell repertoire is generated in the thymus, by V-(D)-J rearrangement. This repertoire is then shaped by intrathymic selection events to generate a peripheral T cell pool of self-MH restricted, non-autoaggressive T cells. Post-thymic interaction of alpha-beta TR with the pMH complexes shapes TR structural and functional avidity. The chain is T cell receptor beta variable 18 from Homo sapiens (Human).